A 312-amino-acid polypeptide reads, in one-letter code: Methionyl-tRNA formyltransferase (312 aa).

Residue 117–120 (SLLP) coordinates (6S)-5,6,7,8-tetrahydrofolate.

This sequence belongs to the Fmt family.

The enzyme catalyses L-methionyl-tRNA(fMet) + (6R)-10-formyltetrahydrofolate = N-formyl-L-methionyl-tRNA(fMet) + (6S)-5,6,7,8-tetrahydrofolate + H(+). Its function is as follows. Attaches a formyl group to the free amino group of methionyl-tRNA(fMet). The formyl group appears to play a dual role in the initiator identity of N-formylmethionyl-tRNA by promoting its recognition by IF2 and preventing the misappropriation of this tRNA by the elongation apparatus. The chain is Methionyl-tRNA formyltransferase from Bordetella bronchiseptica (strain ATCC BAA-588 / NCTC 13252 / RB50) (Alcaligenes bronchisepticus).